The primary structure comprises 294 residues: Foldase protein PrsA 1 (294 aa).

Positions 1–21 (MTKLKKVMISVIAATLLLLAG) are cleaved as a signal peptide. The N-palmitoyl cysteine moiety is linked to residue C22. C22 carries the S-diacylglycerol cysteine lipid modification. The PpiC domain occupies 135–226 (EPDITVRHIL…YGYHLIQLVK (92 aa)).

It belongs to the PrsA family.

Its subcellular location is the cell membrane. The catalysed reaction is [protein]-peptidylproline (omega=180) = [protein]-peptidylproline (omega=0). In terms of biological role, plays a major role in protein secretion by helping the post-translocational extracellular folding of several secreted proteins. The sequence is that of Foldase protein PrsA 1 (prsA1) from Listeria monocytogenes serovar 1/2a (strain ATCC BAA-679 / EGD-e).